A 401-amino-acid polypeptide reads, in one-letter code: Argininosuccinate synthase (401 aa).

Position 8-16 (8-16) interacts with ATP; that stretch reads AYSGGLDTS. An L-citrulline-binding site is contributed by Y85. G115 contacts ATP. L-aspartate contacts are provided by T117, N121, and D122. N121 serves as a coordination point for L-citrulline. 4 residues coordinate L-citrulline: R125, S173, E258, and Y270.

It belongs to the argininosuccinate synthase family. Type 1 subfamily. In terms of assembly, homotetramer.

It localises to the cytoplasm. It catalyses the reaction L-citrulline + L-aspartate + ATP = 2-(N(omega)-L-arginino)succinate + AMP + diphosphate + H(+). It functions in the pathway amino-acid biosynthesis; L-arginine biosynthesis; L-arginine from L-ornithine and carbamoyl phosphate: step 2/3. The sequence is that of Argininosuccinate synthase from Staphylococcus aureus (strain bovine RF122 / ET3-1).